Reading from the N-terminus, the 583-residue chain is MKPVERAKLVRSLRQESRRLRLLVLVIGFFLVTLTFVVISKPDALLFNLNGRLSVDHAPRSLLIRQRIHADSRRSADTFPAAEDPKVVDEDEGAEDATAKGTSEEEKRLLSSEPEQGKNEEAATASEVLGGGGEEDNKNGEEEGHTQHSKVTLPTVSNYTIRDAEDTDNGKQEDGKPNEKYEFEMDADKGDNVEPETDNEEWNKKPLCDFSNFRANVCEMRGNIRIHPNASSVMYMEPASSKREEIWKVKPYPRKGDELCLGHITEITVKSSKVAPECSKYHNVPAVVFALTGYTGNLFHDFTDVLVPLFTTASEFNGEVQFLITDMAIWWTRKYKVVFDKLSKYPLIDFNNDDQVHCFKHAIVGLHAYMEFTIDSSKAPHNYSMVDFNRFMRRTYSLPRDFVTALGEIPKAKPRLLIISRQRTRMFLNLNEIVAMAEEIGYEVVVEEANVSSDLSHFGKVVNSVDVMMGVHGAGLTNCVFLPQNATLIQIVPWGGLDWISRIDFGNPAEQMGLRYKQYSIGVHESSLTDQYPLDHEIFTNPLSFHKHGFEFIRQTFMDKQNVKLDCNRFKPVLLEVLDQLNQ.

Residues 1 to 21 (MKPVERAKLVRSLRQESRRLR) lie on the Cytoplasmic side of the membrane. A helical; Signal-anchor for type II membrane protein membrane pass occupies residues 22–42 (LLVLVIGFFLVTLTFVVISKP). The Lumenal segment spans residues 43–583 (DALLFNLNGR…LLEVLDQLNQ (541 aa)). Residues 73–178 (RRSADTFPAA…NGKQEDGKPN (106 aa)) are disordered. Composition is skewed to basic and acidic residues over residues 102–121 (TSEE…KNEE) and 135–146 (EDNKNGEEEGHT). The span at 149-160 (SKVTLPTVSNYT) shows a compositional bias: polar residues. N158 is a glycosylation site (N-linked (GlcNAc...) asparagine). The span at 162–178 (RDAEDTDNGKQEDGKPN) shows a compositional bias: basic and acidic residues. N229, N382, N450, and N485 each carry an N-linked (GlcNAc...) asparagine glycan.

The protein belongs to the glycosyltransferase 61 family.

It localises to the golgi apparatus membrane. It functions in the pathway glycan metabolism. Its function is as follows. Glycosyltransferase involved in the arabinosylation of xylan, the major hemicellulose (non-cellulosic component) of primary and secondary walls of angiosperms. Possesses alpha-1,3-arabinosyltransferase activity, transferring an arabinofuranose residue to the xylan backbone. The polypeptide is Alpha-1,3-arabinosyltransferase XAT2 (Oryza sativa subsp. japonica (Rice)).